The sequence spans 361 residues: MSSVRTAVRRMKPYVPGKPVEDVQRELGLHDLVKLNQNENPLGPSPRAVAAARAAMAQVHTYPEGTARRLRERLAQMWNLPADWFLIGNGSDEVFRLLAEVYLEPGDRVVVPEPSFAAYRFVAELMGAEVVAVPLAGWTMDLPAMAEAAARGAKLLFLCRPNNPTGTVFAEADLRAALERVPPSTLVVVDEAYREFDETPFDSRALVQDYPNVVIARTFSKIYGMAGFRLGYGVMRPEVLAPLYTARDPFSVNGLAVAAGLAALDDVEHVERTRALTREGKAYLYAAFQRLGLGYVPSEANFVLFDAGRPAAEVFDALLRRGVLVRPCGSFGLPDHLRVTVGTPEQNRRFVEALKAALGEG.

Lysine 221 bears the N6-(pyridoxal phosphate)lysine mark.

It belongs to the class-II pyridoxal-phosphate-dependent aminotransferase family. Histidinol-phosphate aminotransferase subfamily. Homodimer. It depends on pyridoxal 5'-phosphate as a cofactor.

It carries out the reaction L-histidinol phosphate + 2-oxoglutarate = 3-(imidazol-4-yl)-2-oxopropyl phosphate + L-glutamate. It functions in the pathway amino-acid biosynthesis; L-histidine biosynthesis; L-histidine from 5-phospho-alpha-D-ribose 1-diphosphate: step 7/9. The chain is Histidinol-phosphate aminotransferase from Symbiobacterium thermophilum (strain DSM 24528 / JCM 14929 / IAM 14863 / T).